The chain runs to 180 residues: Major urinary protein 5 (180 aa).

The N-terminal stretch at 1–18 (MKLLLLLCLELTLVYVHA) is a signal peptide. Cysteine 82 and cysteine 175 are disulfide-bonded.

Belongs to the calycin superfamily. Lipocalin family.

It localises to the secreted. Its function is as follows. Major urinary proteins (Mups) bind pheromones, and thus stabilize them to allow slow release into the air from urine marks. May protect pheromones from oxidation. May also act as pheromones themselves. In this context, they play a role in the regulation of social behaviors, such as aggression, mating, pup-suckling, territory establishment and dominance. The chain is Major urinary protein 5 from Mus musculus (Mouse).